We begin with the raw amino-acid sequence, 2979 residues long: Polyketide synthase-nonribosomal peptide synthetase TwmB (2979 aa).

In terms of domain architecture, Ketosynthase family 3 (KS3) spans 5-435 (GAEIAIIGSG…GTNAHAILES (431 aa)). Residues Cys176, His315, and His355 each act as for beta-ketoacyl synthase activity in the active site. Residues 549–864 (VFTGQGAQWA…PYTGLFTRGV (316 aa)) form a malonyl-CoA:ACP transacylase (MAT) domain region. Ser643 serves as the catalytic For malonyltransferase activity. An N-terminal hotdog fold region spans residues 936-1070 (HDLLGHLTPN…GRVRIHLGEA (135 aa)). The segment at 936 to 1234 (HDLLGHLTPN…ECVPFSRQTA (299 aa)) is dehydratase (DH) domain. Positions 936–1235 (HDLLGHLTPN…CVPFSRQTAK (300 aa)) constitute a PKS/mFAS DH domain. The active-site Proton acceptor; for dehydratase activity is His968. The interval 1085-1235 (LVSVSEKKFY…CVPFSRQTAK (151 aa)) is C-terminal hotdog fold. The active-site Proton donor; for dehydratase activity is the Asp1141. The tract at residues 1387–1572 (NFTAHLAGIL…GIDTSTVEQP (186 aa)) is inactive methyltransferase (MT) domain. Positions 2098–2271 (TYWLVGLTGG…AASVMDIGAV (174 aa)) are ketoreductase (KR)domain. A Carrier domain is found at 2380–2465 (RNNEEAYGIV…ELVDTATEAI (86 aa)). Position 2425 is an O-(pantetheine 4'-phosphoryl)serine (Ser2425). The disordered stretch occupies residues 2476 to 2497 (YPAEQTSSQNSDSGQDMASSFD). The span at 2479–2497 (EQTSSQNSDSGQDMASSFD) shows a compositional bias: polar residues. Residues 2534–2970 (KSIPVSFTQA…MTLGQAALAE (437 aa)) are condensation.

As to quaternary structure, interacts with TwmE. It depends on pantetheine 4'-phosphate as a cofactor.

The enzyme catalyses 5-aminopentanoate + 7 malonyl-CoA + acetyl-CoA + 11 NADPH + 17 H(+) = wortmanamide A + 7 CO2 + 11 NADP(+) + 8 CoA + 6 H2O. The catalysed reaction is 5-aminopentanoate + 8 malonyl-CoA + acetyl-CoA + 13 NADPH + 20 H(+) = wortmanamide B + 8 CO2 + 13 NADP(+) + 9 CoA + 7 H2O. It functions in the pathway secondary metabolite biosynthesis. In terms of biological role, polyketide synthase-nonribosomal peptide synthetase; part of the gene cluster that mediates the biosynthesis of wortmanamides A and B, reduced long-chain polyketides amidated with a specific omega-amino acid, 5-aminopentanoic acid (5PA). The PKS modules of TwmB are involved in the synthesis of the polyketide backbone, whereas the non-canonical C domain of TwmB is a bonafide condensation domain that specifically selects 5PA and catalyzes amidation to release polyketide chain. The C domain clearly prefers C16 and C18 fatty acyl substrates, which is consistent with simultaneous formation of both octaketide and nonaketide acyl amides wortmanamides A and B. Because TwmB lacks a designated enoylreductase (ER) domain, the required activity is provided the enoyl reductase TwmE. The roles of the remaining enzymes have still to be clarified. This chain is Polyketide synthase-nonribosomal peptide synthetase TwmB, found in Talaromyces wortmannii (Penicillium wortmannii).